The following is a 90-amino-acid chain: Protein LURE 1.5 (90 aa).

Positions 1-19 (MKLPIIFLTLLIFVSSCTS) are cleaved as a signal peptide. Intrachain disulfides connect Cys58–Cys75 and Cys61–Cys82.

The protein belongs to the DEFL family. As to expression, expressed in the pistil. Detected exclusively in the synergid cells.

Its subcellular location is the secreted. In terms of biological role, inactive pollen tube attractants guiding pollen tubes to the ovular micropyle. This Arabidopsis thaliana (Mouse-ear cress) protein is Protein LURE 1.5.